We begin with the raw amino-acid sequence, 61 residues long: Photosystem II reaction center protein K (61 aa).

The propeptide occupies 1–24; that stretch reads MLNTFSLIGICLNSTLFSSSFFFG. A helical transmembrane segment spans residues 36 to 56; the sequence is IVDIMPVIPLFFFLLAFVWQA.

The protein belongs to the PsbK family. PSII is composed of 1 copy each of membrane proteins PsbA, PsbB, PsbC, PsbD, PsbE, PsbF, PsbH, PsbI, PsbJ, PsbK, PsbL, PsbM, PsbT, PsbX, PsbY, PsbZ, Psb30/Ycf12, at least 3 peripheral proteins of the oxygen-evolving complex and a large number of cofactors. It forms dimeric complexes.

The protein resides in the plastid. It localises to the chloroplast thylakoid membrane. In terms of biological role, one of the components of the core complex of photosystem II (PSII). PSII is a light-driven water:plastoquinone oxidoreductase that uses light energy to abstract electrons from H(2)O, generating O(2) and a proton gradient subsequently used for ATP formation. It consists of a core antenna complex that captures photons, and an electron transfer chain that converts photonic excitation into a charge separation. The polypeptide is Photosystem II reaction center protein K (Nicotiana tomentosiformis (Tobacco)).